The following is a 694-amino-acid chain: MSVSYFQERGTPASGDVLSPATTSLGGASRGANALSSRITSVLSASYADLEIRDALETLDTRGVRNTAETRRQIRLDVQKEVIECNGEIVKDFGQVAEQLKRIGTAISSLNSYCADMRSHIAAANKETGPVLEEATGLINQRKQVESKQQILQAFNSHFLISDEEATVLTSTAEPVNEEFFQVLTRVKKIHHDCQVLLGTEDQRLGLEILEQSSKQLNAAFQKLYRWIQREFKTLDLENPQISASVRRSLRVLAERPTLFQSCLDSFAEARESILSDSFHSALTGSASDAEHIATKPIEFQAHDPLRYVGDMLAWVHSTTVSEREALENLFISDGDEIKRSIQEGLESEPWLKDEEAEIFDGRKALSQLVGRDLASVARVLRQRTEQVVQSHDDATLAYKIANLIGFYKGMFAKLLGTDSDVLEVFTTLEASAMRQFRANMRDYVAAVQSDIAVPPQDLSPPDFLDDALQTLKVLAKSYDTSSAGAEDQEQGFQAVLAEALDPFMSGCVNLQKGLQQPDSAVFAINCLFAAKDVLSAFTFASERVEEMEDTISEQVAQLVDYQHEYLLHESGLATLLEALEPITDDEESLKTIPELEPFKRDALVAASQQLDEFLPSALIDAAENLKRLKNRKMIQDITEEAAASFCEDFEVVESKIIAADDLTYDEDKEDEEQEPGLRDLFPRTSGEIRVLLS.

Residues methionine 1 to proline 20 are disordered.

Belongs to the COG6 family.

It localises to the golgi apparatus membrane. Its function is as follows. Acts as a component of the peripheral membrane COG complex that is involved in intra-Golgi protein trafficking. COG is located at the cis-Golgi, and regulates tethering of retrograde intra-Golgi vesicles and possibly a number of other membrane trafficking events. In Phaeosphaeria nodorum (strain SN15 / ATCC MYA-4574 / FGSC 10173) (Glume blotch fungus), this protein is Conserved oligomeric Golgi complex subunit 6 (COG6).